A 211-amino-acid polypeptide reads, in one-letter code: Protein-L-isoaspartate O-methyltransferase (211 aa).

The active site involves Ser-59.

The protein belongs to the methyltransferase superfamily. L-isoaspartyl/D-aspartyl protein methyltransferase family.

It is found in the cytoplasm. The catalysed reaction is [protein]-L-isoaspartate + S-adenosyl-L-methionine = [protein]-L-isoaspartate alpha-methyl ester + S-adenosyl-L-homocysteine. Its function is as follows. Catalyzes the methyl esterification of L-isoaspartyl residues in peptides and proteins that result from spontaneous decomposition of normal L-aspartyl and L-asparaginyl residues. It plays a role in the repair and/or degradation of damaged proteins. This chain is Protein-L-isoaspartate O-methyltransferase, found in Ignicoccus hospitalis (strain KIN4/I / DSM 18386 / JCM 14125).